We begin with the raw amino-acid sequence, 118 residues long: UPF0102 protein RSal33209_1090 (118 aa).

This sequence belongs to the UPF0102 family.

This Renibacterium salmoninarum (strain ATCC 33209 / DSM 20767 / JCM 11484 / NBRC 15589 / NCIMB 2235) protein is UPF0102 protein RSal33209_1090.